We begin with the raw amino-acid sequence, 369 residues long: MKYKRIVFKVGTSSLTNEDGSLSRSKVKDITQQLAMLHEAGHELILVSSGAIAAGFGALGFKKRPTKIADKQASAAVGQGLLLEEYTTNLLLRQIVSAQILLTQDDFVDKRRYKNAHQALSVLLNRGAIPIINENDSVVIDELKVGDNDTLSAQVAAMVQADLLVFLTDVDGLYTGNPNSDPRAKRLERIETINREIIDMAGGAGSSNGTGGMLTKIKAATIATESGVPVYICSSLKSDSMIEAAEETEDGSYFVAQEKGLRTQKQWLAFYAQSQGSIWVDKGAAEALSQHGKSLLLSGIVEAEGVFSYGDIVTVFDKESGKSLGKGRVQFGASALEDILRSQKAKGVLIYRDDWISITPEIQLLFTEF.

Lysine 9 provides a ligand contact to ATP. Residues serine 49, aspartate 136, and asparagine 148 each contribute to the substrate site. ATP-binding positions include 168–169 (TD) and 210–216 (TGGMLTK). One can recognise a PUA domain in the interval 275–355 (QGSIWVDKGA…KGVLIYRDDW (81 aa)).

The protein belongs to the glutamate 5-kinase family.

It is found in the cytoplasm. It carries out the reaction L-glutamate + ATP = L-glutamyl 5-phosphate + ADP. Its pathway is amino-acid biosynthesis; L-proline biosynthesis; L-glutamate 5-semialdehyde from L-glutamate: step 1/2. Its function is as follows. Catalyzes the transfer of a phosphate group to glutamate to form L-glutamate 5-phosphate. The chain is Glutamate 5-kinase from Streptococcus pneumoniae serotype 2 (strain D39 / NCTC 7466).